We begin with the raw amino-acid sequence, 265 residues long: Thiazole synthase (265 aa).

The Schiff-base intermediate with DXP role is filled by Lys-106. Residues Gly-167, Ala-193–Gly-194, and Asn-215–Ser-216 contribute to the 1-deoxy-D-xylulose 5-phosphate site.

It belongs to the ThiG family. Homotetramer. Forms heterodimers with either ThiH or ThiS.

It is found in the cytoplasm. It catalyses the reaction [ThiS sulfur-carrier protein]-C-terminal-Gly-aminoethanethioate + 2-iminoacetate + 1-deoxy-D-xylulose 5-phosphate = [ThiS sulfur-carrier protein]-C-terminal Gly-Gly + 2-[(2R,5Z)-2-carboxy-4-methylthiazol-5(2H)-ylidene]ethyl phosphate + 2 H2O + H(+). It participates in cofactor biosynthesis; thiamine diphosphate biosynthesis. Its function is as follows. Catalyzes the rearrangement of 1-deoxy-D-xylulose 5-phosphate (DXP) to produce the thiazole phosphate moiety of thiamine. Sulfur is provided by the thiocarboxylate moiety of the carrier protein ThiS. In vitro, sulfur can be provided by H(2)S. This is Thiazole synthase from Prochlorococcus marinus (strain MIT 9515).